Reading from the N-terminus, the 272-residue chain is Undecaprenyl-diphosphatase (272 aa).

The next 7 helical transmembrane spans lie at 39 to 59, 87 to 107, 113 to 133, 145 to 165, 188 to 208, 220 to 240, and 251 to 271; these read SGLT…FVYF, WMIV…EQPI, SSPL…GLTD, ITLG…VPGV, FSFL…GLHL, PMLV…AFLL, and FVWY…VGLL.

Belongs to the UppP family.

Its subcellular location is the cell inner membrane. The enzyme catalyses di-trans,octa-cis-undecaprenyl diphosphate + H2O = di-trans,octa-cis-undecaprenyl phosphate + phosphate + H(+). In terms of biological role, catalyzes the dephosphorylation of undecaprenyl diphosphate (UPP). Confers resistance to bacitracin. The polypeptide is Undecaprenyl-diphosphatase (Trichlorobacter lovleyi (strain ATCC BAA-1151 / DSM 17278 / SZ) (Geobacter lovleyi)).